Reading from the N-terminus, the 256-residue chain is Imidazole glycerol phosphate synthase subunit HisF (256 aa).

Active-site residues include Asp-12 and Asp-131.

The protein belongs to the HisA/HisF family. Heterodimer of HisH and HisF.

Its subcellular location is the cytoplasm. The enzyme catalyses 5-[(5-phospho-1-deoxy-D-ribulos-1-ylimino)methylamino]-1-(5-phospho-beta-D-ribosyl)imidazole-4-carboxamide + L-glutamine = D-erythro-1-(imidazol-4-yl)glycerol 3-phosphate + 5-amino-1-(5-phospho-beta-D-ribosyl)imidazole-4-carboxamide + L-glutamate + H(+). The protein operates within amino-acid biosynthesis; L-histidine biosynthesis; L-histidine from 5-phospho-alpha-D-ribose 1-diphosphate: step 5/9. Its function is as follows. IGPS catalyzes the conversion of PRFAR and glutamine to IGP, AICAR and glutamate. The HisF subunit catalyzes the cyclization activity that produces IGP and AICAR from PRFAR using the ammonia provided by the HisH subunit. This is Imidazole glycerol phosphate synthase subunit HisF from Pseudomonas fluorescens (strain ATCC BAA-477 / NRRL B-23932 / Pf-5).